The chain runs to 160 residues: MRILVQRVTEASVNVDGRQVAAIGPGIMALVGFGQEDGPDFHNRPAFRGMAQKLAGLRIFPGQGELANKFHTSLEEFGGQLLLVPQFTLYADCRKGRRPSFTDAGNPAWAEPMFEHFVKIVDESCSVSVSSGIFGADMAVRLCNWGPVTIWLDSLSLFGS.

The short motif at 146–147 (GP) is the Gly-cisPro motif, important for rejection of L-amino acids element.

This sequence belongs to the DTD family. As to quaternary structure, homodimer.

It is found in the cytoplasm. The enzyme catalyses glycyl-tRNA(Ala) + H2O = tRNA(Ala) + glycine + H(+). It carries out the reaction a D-aminoacyl-tRNA + H2O = a tRNA + a D-alpha-amino acid + H(+). Its function is as follows. An aminoacyl-tRNA editing enzyme that deacylates mischarged D-aminoacyl-tRNAs. Also deacylates mischarged glycyl-tRNA(Ala), protecting cells against glycine mischarging by AlaRS. Acts via tRNA-based rather than protein-based catalysis; rejects L-amino acids rather than detecting D-amino acids in the active site. By recycling D-aminoacyl-tRNA to D-amino acids and free tRNA molecules, this enzyme counteracts the toxicity associated with the formation of D-aminoacyl-tRNA entities in vivo and helps enforce protein L-homochirality. The protein is D-aminoacyl-tRNA deacylase of Desulfovibrio desulfuricans (strain ATCC 27774 / DSM 6949 / MB).